The sequence spans 501 residues: G protein-activated inward rectifier potassium channel 1 (501 aa).

Positions 1 to 40 (MSALRRKFGDDYQVVTTSSSGSGLQPQGPGQGPQQQLVPK) are disordered. Residues 1 to 80 (MSALRRKFGD…LFTTLVDLKW (80 aa)) are Cytoplasmic-facing. Residues 18–37 (SSSGSGLQPQGPGQGPQQQL) show a composition bias toward low complexity. A helical transmembrane segment spans residues 81–105 (RWNLFIFILTYTVAWLFMASMWWVI). Topologically, residues 106–129 (AYTRGDLNKAHVGNYTPCVANVYN) are extracellular. N-linked (GlcNAc...) asparagine glycosylation is present at N119. Positions 130-141 (FPSAFLFFIETE) form an intramembrane region, helical; Pore-forming. An intramembrane region (pore-forming) is located at residues 142–148 (ATIGYGY). The short motif at 143–148 (TIGYGY) is the Selectivity filter element. Topologically, residues 149–157 (RYITDKCPE) are extracellular. The chain crosses the membrane as a helical span at residues 158 to 179 (GIILFLFQSILGSIVDAFLIGC). Residues 180-501 (MFIKMSQPKK…LRKMNSDRFT (322 aa)) lie on the Cytoplasmic side of the membrane. The polyphosphoinositide (PIP2)-binding stretch occupies residues 182-209 (IKMSQPKKRAETLMFSEHAVISMRDGKL). S385 and S424 each carry phosphoserine.

Belongs to the inward rectifier-type potassium channel (TC 1.A.2.1) family. KCNJ3 subfamily. As to quaternary structure, associates with KCNJ5/GIRK4 or KCNJ6/GIRK2 or KCNJ9/GIRK3 to form a G-protein activated heteromultimer pore-forming unit. The resulting inward current is much larger.

The protein resides in the membrane. It catalyses the reaction K(+)(in) = K(+)(out). Heteromultimer composed of KCNJ3/GIRK1 and KCNJ5/GIRK4 is activated by phosphatidylinositol 4,5 biphosphate (PtdIns(4,5)P2). Functionally, inward rectifier potassium channels are characterized by a greater tendency to allow potassium to flow into the cell rather than out of it. Their voltage dependence is regulated by the concentration of extracellular potassium; as external potassium is raised, the voltage range of the channel opening shifts to more positive voltages. The inward rectification is mainly due to the blockage of outward current by internal magnesium. This potassium channel is controlled by G proteins. This receptor plays a crucial role in regulating the heartbeat. This Bos taurus (Bovine) protein is G protein-activated inward rectifier potassium channel 1 (KCNJ3).